Reading from the N-terminus, the 216-residue chain is Uracil phosphoribosyltransferase (216 aa).

Residues Arg-30, Arg-39, 73 to 76 (ASKI), and Lys-75 each bind GTP. Arg-83 lines the 5-phospho-alpha-D-ribose 1-diphosphate pocket. A GTP-binding site is contributed by Lys-100. Arg-108 lines the 5-phospho-alpha-D-ribose 1-diphosphate pocket. Arg-129 lines the GTP pocket. 5-phospho-alpha-D-ribose 1-diphosphate contacts are provided by residues Asp-135 and 135–143 (DPMLATGGT). Position 199 (Tyr-199) interacts with D-ribose 5-phosphate. Residues Ile-200 and 205–207 (GDF) each bind uracil. Position 206 (Asp-206) interacts with 5-phospho-alpha-D-ribose 1-diphosphate.

The protein belongs to the UPRTase family. It depends on Mg(2+) as a cofactor.

The catalysed reaction is UMP + diphosphate = 5-phospho-alpha-D-ribose 1-diphosphate + uracil. The protein operates within pyrimidine metabolism; UMP biosynthesis via salvage pathway; UMP from uracil: step 1/1. Allosterically activated by GTP. In terms of biological role, catalyzes the conversion of uracil and 5-phospho-alpha-D-ribose 1-diphosphate (PRPP) to UMP and diphosphate. The sequence is that of Uracil phosphoribosyltransferase (uprt) from Dictyostelium discoideum (Social amoeba).